Consider the following 84-residue polypeptide: U8-theraphotoxin-Hhn1a (84 aa).

The signal sequence occupies residues 1-21 (MKVVLLECLVWMMAMMELVSC). 5 cysteine pairs are disulfide-bonded: Cys-23/Cys-35, Cys-29/Cys-44, Cys-34/Cys-67, Cys-54/Cys-75, and Cys-69/Cys-81.

The protein belongs to the AVIT (prokineticin) family. In terms of tissue distribution, expressed by the venom gland.

Its subcellular location is the secreted. The polypeptide is U8-theraphotoxin-Hhn1a (Cyriopagopus hainanus (Chinese bird spider)).